The following is a 292-amino-acid chain: 2-hydroxy-3-oxopropionate reductase (292 aa).

Residues 4–18 (GFIG…MAIN) and Ser-94 contribute to the NAD(+) site. Lys-169 is an active-site residue. Lys-237 lines the NAD(+) pocket.

It belongs to the HIBADH-related family.

It carries out the reaction (R)-glycerate + NADP(+) = 2-hydroxy-3-oxopropanoate + NADPH + H(+). The enzyme catalyses (R)-glycerate + NAD(+) = 2-hydroxy-3-oxopropanoate + NADH + H(+). The protein operates within organic acid metabolism; glycolate degradation; 3-phospho-D-glycerate from glycolate: step 3/4. This chain is 2-hydroxy-3-oxopropionate reductase (glxR), found in Escherichia coli (strain K12).